The primary structure comprises 324 residues: Acetyl-coenzyme A carboxylase carboxyl transferase subunit alpha (324 aa).

Positions 37–291 (ILEDKLENLE…DLMIRKTFEQ (255 aa)) constitute a CoA carboxyltransferase C-terminal domain.

This sequence belongs to the AccA family. Acetyl-CoA carboxylase is a heterohexamer composed of biotin carboxyl carrier protein (AccB), biotin carboxylase (AccC) and two subunits each of ACCase subunit alpha (AccA) and ACCase subunit beta (AccD).

The protein localises to the cytoplasm. The catalysed reaction is N(6)-carboxybiotinyl-L-lysyl-[protein] + acetyl-CoA = N(6)-biotinyl-L-lysyl-[protein] + malonyl-CoA. It participates in lipid metabolism; malonyl-CoA biosynthesis; malonyl-CoA from acetyl-CoA: step 1/1. Functionally, component of the acetyl coenzyme A carboxylase (ACC) complex. First, biotin carboxylase catalyzes the carboxylation of biotin on its carrier protein (BCCP) and then the CO(2) group is transferred by the carboxyltransferase to acetyl-CoA to form malonyl-CoA. This chain is Acetyl-coenzyme A carboxylase carboxyl transferase subunit alpha, found in Bacillus cereus (strain G9842).